The following is a 410-amino-acid chain: MFVRALSLRDFRSWDALGLTLRPGCTVFVGPNGHGKTNVLEALGYLSTLSSHRVSSDAPLIRTGTGQAFAGATVVNAGRELTVDLELNEGKSNRARINQSPTRRPREILGILQTVLFAPEDLSLVRGDPGDRRRYLDELLTSRIPRMAAVRADYDRVLRQRSALLKTAGGALRRVSRGSGRPSEDGASALATLEVWDGHLAAHGAQLLAGRLHLVHDLAPHLAESYQSLAPESRPASIRYRSSLGSSLPPEFTEPARVPEAGDIAFLEERFLQELSVMRSKEIERGVCLVGPHRDDLELHLGDTPAKGFASHGESWSFALSLRLAGFALLRSDGSDPVLMLDDVFAELDRRRRRALAKVALDAEQVLITAAVPEDVPEELDAVRFGVEARDTDRGRISHIVEEPEDRSDG.

Residue 30 to 37 participates in ATP binding; sequence GPNGHGKT.

It belongs to the RecF family.

It is found in the cytoplasm. Functionally, the RecF protein is involved in DNA metabolism; it is required for DNA replication and normal SOS inducibility. RecF binds preferentially to single-stranded, linear DNA. It also seems to bind ATP. The sequence is that of DNA replication and repair protein RecF from Rhodococcus jostii (strain RHA1).